The sequence spans 589 residues: EZH inhibitory protein (589 aa).

3 disordered regions span residues 1-46 (MASS…LRLR), 61-548 (AGED…SGPN), and 561-589 (LDSSSPRVPGEEIEAAPHTREEEDKKCRG). Gly residues-rich tracts occupy residues 29–38 (GPRGRGGPSG) and 105–114 (PKGGGKADQG). The span at 147–161 (GAAGPPLPGARGSPA) shows a compositional bias: low complexity. The span at 193 to 204 (LRSSTSQGSGST) shows a compositional bias: polar residues. Low complexity-rich tracts occupy residues 299 to 308 (RSSASAVSPE), 325 to 334 (RSSASVVSPE), 351 to 360 (RSSASVVSPE), and 374 to 390 (PRATPRVPVAPSSTTRS). Position 306 is a phosphoserine (serine 306). The span at 426 to 437 (MRLDLQVDREPE) shows a compositional bias: basic and acidic residues. The segment covering 438 to 449 (SEAEQEEQELES) has biased composition (acidic residues). Residues 450 to 465 (EPGPSSRPQASRSSSR) show a composition bias toward low complexity. Residues 482–490 (RRPVRMRAS) form a sufficient for interaction with EZH2 region. The interval 484–503 (PVRMRASSPSPPGRLYPLPK) is necessary and sufficient for inhibition of PRC2/EED-EZH1 and PRC2/EED-EZH2 complex activity. Residues 509–547 (VHSPSSSSSESSSVSSSHSPLNKAPDPGSSPPLSSLSGP) are compositionally biased toward low complexity. Residues 575 to 589 (AAPHTREEEDKKCRG) are compositionally biased toward basic and acidic residues.

In terms of assembly, interacts with PRC2/EED-EZH1 complex member EZH1 and with PRC2/EED-EZH2 complex member EZH2; the interaction blocks EZH1/EZH2 methyltransferase activity. Interacts (via C-terminus) with SUZ12 which is a member of the PRC2/EED-EZH1 and PRC2/EED-EZH2 complexes. In terms of tissue distribution, highly expressed in ovary with lower expression in testis and very low levels in other tissues tested including prostate, brain, kidney, spleen and liver. During spermatogenesis, expressed mainly in spermatogonia with very low expression in spermatocytes I and II.

It localises to the nucleus. The protein resides in the cytoplasm. Inhibits PRC2/EED-EZH1 and PRC2/EED-EZH2 complex function by inhibiting EZH1/EZH2 methyltransferase activity, thereby causing down-regulation of histone H3 trimethylation at 'Lys-27' (H3K27me3). Probably inhibits methyltransferase activity by limiting the stimulatory effect of cofactors such as AEBP2 and JARID2. Inhibits H3K27me3 deposition during spermatogenesis and oogenesis. The chain is EZH inhibitory protein from Mus musculus (Mouse).